Reading from the N-terminus, the 249-residue chain is 5'-nucleotidase SurE (249 aa).

D9, D10, S40, and N92 together coordinate a divalent metal cation.

This sequence belongs to the SurE nucleotidase family. The cofactor is a divalent metal cation.

It localises to the cytoplasm. The enzyme catalyses a ribonucleoside 5'-phosphate + H2O = a ribonucleoside + phosphate. In terms of biological role, nucleotidase that shows phosphatase activity on nucleoside 5'-monophosphates. The protein is 5'-nucleotidase SurE of Shewanella putrefaciens (strain CN-32 / ATCC BAA-453).